A 362-amino-acid polypeptide reads, in one-letter code: uncharacterized protein (362 aa).

Positions 314 to 323 (GEEKEPKQES) are enriched in basic and acidic residues. The tract at residues 314 to 362 (GEEKEPKQESQEQLFNPFTIDEMLTEEQQQQQEEENNATEEEGDTVKLG) is disordered. Residues 345-356 (QEEENNATEEEG) show a composition bias toward acidic residues.

This is an uncharacterized protein from Acidianus two-tailed virus (ATV).